Here is a 213-residue protein sequence, read N- to C-terminus: Eukaryotic translation initiation factor isoform 4E (213 aa).

Residues 1-37 (MATEVAAAVPPPQLDAEENSGLEAAAAEAKIQPSSGP) form a disordered region. Residues 56 to 61 (QGAAWG), Lys88, and 106 to 107 (WE) each bind mRNA. Cys111 and Cys150 form a disulfide bridge. MRNA contacts are provided by residues 157–162 (RQRQDK) and 202–205 (KRER).

This sequence belongs to the eukaryotic initiation factor 4E family. In terms of assembly, EIF4F is a multi-subunit complex, the composition of which varies with external and internal environmental conditions. It is composed of at least EIF4A, EIF4E and EIF4G. EIF4E is also known to interact with other partners. In higher plants two isoforms of EIF4F have been identified, named isoform EIF4F and isoform EIF(iso)4F. Isoform EIF4F has subunits p220 and p26, whereas isoform EIF(iso)4F has subunits p82 and p28. As to quaternary structure, (Microbial infection) Interacts with potyvirus viral genome-linked protein (VPg) of plum pox virus (PPV) strain D both in nucleus and cytoplasm; this interaction is possible in susceptible hosts but is impaired in resistant plants. In terms of processing, according to the redox status, the Cys-111-Cys-150 disulfide bridge may have a role in regulating protein function by affecting its ability to bind capped mRNA. As to expression, mostly expressed in leaves, flower buds, leaf buds and anthers, to a lower extent in roots, stems and green immature fruit, and, at low levels, in petals.

The protein localises to the cytoplasm. The protein resides in the nucleus. Its function is as follows. Component of the protein complex eIF4F, which is involved in the recognition of the mRNA cap, ATP-dependent unwinding of 5'-terminal secondary structure and recruitment of mRNA to the ribosome. Recognizes and binds the 7-methylguanosine-containing mRNA cap during an early step in the initiation of protein synthesis and facilitates ribosome binding by inducing the unwinding of the mRNAs secondary structures. Key component of recessive resistance to potyviruses such as the plum pox virus (PPV) strain D. (Microbial infection) Susceptibility host factor required for viral infection by recruiting viral RNAs to the host ribosomal complex via an interaction with viral genome-linked protein (VPg). The sequence is that of Eukaryotic translation initiation factor isoform 4E from Prunus domestica (Garden plum).